A 115-amino-acid chain; its full sequence is uncharacterized protein (115 aa).

The region spanning 1 to 115 is the MSP domain; sequence MGVEISLDPP…ETVIKLSAAE (115 aa).

This is an uncharacterized protein from Caenorhabditis elegans.